Here is a 248-residue protein sequence, read N- to C-terminus: Probable transcriptional regulatory protein RPB_4273 (248 aa).

Residues 1-22 (MAGHSQFKNIMHRKGKQDAQRS) are disordered.

The protein belongs to the TACO1 family.

The protein resides in the cytoplasm. The chain is Probable transcriptional regulatory protein RPB_4273 from Rhodopseudomonas palustris (strain HaA2).